A 183-amino-acid polypeptide reads, in one-letter code: Der GTPase-activating protein YihI (183 aa).

Positions 1–18 are enriched in low complexity; the sequence is MNQPSKAPRAPRSSAATP. Residues 1–114 form a disordered region; that stretch reads MNQPSKAPRA…EEELAKLEND (114 aa). A compositionally biased stretch (basic and acidic residues) spans 25–34; that stretch reads RAELDQEARE. The span at 56–65 shows a compositional bias: low complexity; the sequence is NQKNKAAAQA. Residues 92–114 are compositionally biased toward basic and acidic residues; it reads PKAEAKPKPRLTPEEELAKLEND.

It belongs to the YihI family. As to quaternary structure, interacts with Der.

Its function is as follows. A GTPase-activating protein (GAP) that modifies Der/EngA GTPase function. May play a role in ribosome biogenesis. The sequence is that of Der GTPase-activating protein YihI from Serratia proteamaculans (strain 568).